A 526-amino-acid polypeptide reads, in one-letter code: Non-reducing end alpha-L-arabinofuranosidase BoGH43A (526 aa).

The signal sequence occupies residues 1–20 (MRNALFLIFISLCSVCKSSA). D34 serves as the catalytic Proton acceptor. Catalysis depends on E189, which acts as the Proton donor.

It belongs to the glycosyl hydrolase 43 family.

It is found in the periplasm. The enzyme catalyses Hydrolysis of terminal non-reducing alpha-L-arabinofuranoside residues in alpha-L-arabinosides.. The protein operates within glucan metabolism; xyloglucan degradation. In terms of biological role, alpha-L-arabinofuranosidase involved in xyloglucan degradation by mediating the cleavage of terminal non-reducing alpha-L-arabinofuranoside residues in xyloglucan branches, converting the 'S' units to 'X' units. The chain is Non-reducing end alpha-L-arabinofuranosidase BoGH43A from Bacteroides ovatus (strain ATCC 8483 / DSM 1896 / JCM 5824 / BCRC 10623 / CCUG 4943 / NCTC 11153).